The chain runs to 473 residues: Ribosomal protein uS12 methylthiotransferase RimO (473 aa).

Positions 30-141 constitute an MTTase N-terminal domain; the sequence is ASVAVLHLGC…IVQIIERVER (112 aa). Residues Cys-39, Cys-75, Cys-104, Cys-179, Cys-183, and Cys-186 each contribute to the [4Fe-4S] cluster site. The 230-residue stretch at 165-394 folds into the Radical SAM core domain; sequence TTHAPVAYLR…MQVQQGITFR (230 aa). The TRAM domain occupies 397–463; that stretch reads REQVGRVVPV…PYDLFGQVVA (67 aa).

It belongs to the methylthiotransferase family. RimO subfamily. The cofactor is [4Fe-4S] cluster.

It is found in the cytoplasm. The enzyme catalyses L-aspartate(89)-[ribosomal protein uS12]-hydrogen + (sulfur carrier)-SH + AH2 + 2 S-adenosyl-L-methionine = 3-methylsulfanyl-L-aspartate(89)-[ribosomal protein uS12]-hydrogen + (sulfur carrier)-H + 5'-deoxyadenosine + L-methionine + A + S-adenosyl-L-homocysteine + 2 H(+). Catalyzes the methylthiolation of an aspartic acid residue of ribosomal protein uS12. This Synechococcus sp. (strain JA-2-3B'a(2-13)) (Cyanobacteria bacterium Yellowstone B-Prime) protein is Ribosomal protein uS12 methylthiotransferase RimO.